The primary structure comprises 284 residues: L-ribulose-5-phosphate 3-epimerase UlaE (284 aa).

Belongs to the L-ribulose-5-phosphate 3-epimerase family.

The enzyme catalyses L-ribulose 5-phosphate = L-xylulose 5-phosphate. Its pathway is cofactor degradation; L-ascorbate degradation; D-xylulose 5-phosphate from L-ascorbate: step 3/4. In terms of biological role, catalyzes the isomerization of L-xylulose-5-phosphate to L-ribulose-5-phosphate. Is involved in the anaerobic L-ascorbate utilization. The sequence is that of L-ribulose-5-phosphate 3-epimerase UlaE from Shigella flexneri serotype 5b (strain 8401).